Reading from the N-terminus, the 258-residue chain is Dihydroorotate dehydrogenase B (NAD(+)), electron transfer subunit (258 aa).

The FAD-binding FR-type domain maps to 1-101; the sequence is MKKAYLTVVS…LGPLGNGYDP (101 aa). Residues 52-55, 69-71, and 76-77 each bind FAD; these read RPIS, IYR, and GT. Cys-220, Cys-225, Cys-228, and Cys-243 together coordinate [2Fe-2S] cluster.

It belongs to the PyrK family. In terms of assembly, heterotetramer of 2 PyrK and 2 PyrD type B subunits. The cofactor is [2Fe-2S] cluster. It depends on FAD as a cofactor.

It participates in pyrimidine metabolism; UMP biosynthesis via de novo pathway; orotate from (S)-dihydroorotate (NAD(+) route): step 1/1. Its function is as follows. Responsible for channeling the electrons from the oxidation of dihydroorotate from the FMN redox center in the PyrD type B subunit to the ultimate electron acceptor NAD(+). The chain is Dihydroorotate dehydrogenase B (NAD(+)), electron transfer subunit from Bacillus pumilus (strain SAFR-032).